The following is a 147-amino-acid chain: Hemoglobin subunit deltaH (147 aa).

The Globin domain maps to arginine 3–histidine 147. Positions 64 and 93 each coordinate heme b.

The protein belongs to the globin family. In terms of assembly, heterotetramer of two delta chains and two alpha chains. In terms of tissue distribution, red blood cells.

The protein is Hemoglobin subunit deltaH of Heterohyrax brucei (Yellow-spotted hyrax).